The sequence spans 91 residues: Putative 26S proteasome complex subunit sem-1 (91 aa).

Residues 1 to 73 are disordered; the sequence is MASTQPKNDA…SWDDDDTSDD (73 aa). The span at 8–28 shows a compositional bias: basic and acidic residues; it reads NDAKSTEPKPEQPVTEKKTAV. 2 stretches are compositionally biased toward acidic residues: residues 29–48 and 63–72; these read LEED…AEDT and ESWDDDDTSD.

The protein belongs to the DSS1/SEM1 family. Part of the 26S proteasome.

Its function is as follows. Subunit of the 26S proteasome which plays a role in ubiquitin-dependent proteolysis. This chain is Putative 26S proteasome complex subunit sem-1 (sem-1), found in Neurospora crassa (strain ATCC 24698 / 74-OR23-1A / CBS 708.71 / DSM 1257 / FGSC 987).